A 473-amino-acid polypeptide reads, in one-letter code: Cannabinoid receptor 1 (473 aa).

Residues 1–121 (MKSILDGLAD…LNPSQQLAIA (121 aa)) lie on the Extracellular side of the membrane. The tract at residues 2-23 (KSILDGLADTTFRTITTDLLYV) is required for mitochondrial localization. Residues asparagine 78 and asparagine 84 are each glycosylated (N-linked (GlcNAc...) asparagine). The helical transmembrane segment at 122–142 (VLSLTLGTFTVLENLLVLCVI) threads the bilayer. At 143–155 (LHSRSLRCRPSYH) the chain is on the cytoplasmic side. Residues 156-176 (FIGSLAVADLLGSVIFVYSFV) traverse the membrane as a helical segment. At 177 to 188 (DFHVFHRKDSPN) the chain is on the extracellular side. Residues 189-209 (VFLFKLGGVTASFTASVGSLF) traverse the membrane as a helical segment. Topologically, residues 210-233 (LTAIDRYISIHRPLAYKRIVTRPK) are cytoplasmic. The helical transmembrane segment at 234–254 (AVVAFCLMWTIAIVIAVLPLL) threads the bilayer. Residues 255–278 (GWNCKKLQSVCSDIFPLIDETYLM) are Extracellular-facing. The chain crosses the membrane as a helical span at residues 279–299 (FWIGVTSVLLLFIVYAYMYIL). At 300–345 (WKAHSHAVRMIQRGTQKSIIIHTSEDGKVQVTRPDQARMDIRLAKT) the chain is on the cytoplasmic side. Residues 346-366 (LVLILVVLIICWGPLLAIMVY) traverse the membrane as a helical segment. At 367-378 (DVFGKMNKLIKT) the chain is on the extracellular side. A helical transmembrane segment spans residues 379-399 (VFAFCSMLCLLNSTVNPIIYA). Residues 400–473 (LRSKDLRHAF…VSTDTSAEAL (74 aa)) are Cytoplasmic-facing. A lipid anchor (S-palmitoyl cysteine) is attached at cysteine 416. Phosphoserine occurs at positions 426 and 430.

It belongs to the G-protein coupled receptor 1 family. As to quaternary structure, interacts (via C-terminus) with CNRIP1. Associates with G protein alpha subunits, including G(i) alpha-1/GNAI1, G(i) alpha-3/GNAI3 and G(o)-alpha/GNAO1; palmitoylation is important for interaction with GNAI3 and GNAO1. Palmitoylation at Cys-416 is important for recruitment at both plasma membrane and lipid rafts and association with G protein alpha subunits. In terms of tissue distribution, expressed in brain neurons (at protein level). Detected throughout the striatum, cortex and hippocampus, with highest levels in the lateral striatum. In rostral brain regions, high expression levels in the dorsal lateral striatum, while in the caudal brain regions, high levels are observed in the ventral lateral striatum. Expressed in neurons. In the hypothalamus, expressed in both GABAergic and glutamatergic presynaptic terminals of POMC neurons (at protein level). Expressed in striated muscles, including skeletal muscles (gastrocnemius and rectus abdominis) and myocardium (at protein level). Expressed in the liver, with highest levels in Kupffer cells and lower levels in endothelial cells as well as hepatocytes, particularly in perivascular areas (at protein level). The hepatic expression level is up-regulated in obese mice compared to lean animals.

Its subcellular location is the cell membrane. The protein resides in the mitochondrion outer membrane. It localises to the cell projection. The protein localises to the axon. It is found in the presynapse. Its activity is regulated as follows. Hemopressin, a peptide derived from hemoglobin subunit alpha (HBA1 and/or HBA2), acts as an antagonist peptide: hemopressin-binding efficiently blocks cannabinoid receptor CNR1 and subsequent signaling. Functionally, G-protein coupled receptor for cannabinoids, including endocannabinoids (eCBs), such as N-arachidonoylethanolamide (also called anandamide or AEA) and 2-arachidonoylglycerol (2-AG). Mediates many cannabinoid-induced effects, acting, among others, on food intake, memory loss, gastrointestinal motility, catalepsy, ambulatory activity, anxiety, chronic pain. Signaling typically involves reduction in cyclic AMP. In the hypothalamus, may have a dual effect on mitochondrial respiration depending upon the agonist dose and possibly upon the cell type. Increases respiration at low doses, while decreases respiration at high doses. At high doses, CNR1 signal transduction involves G-protein alpha-i protein activation and subsequent inhibition of mitochondrial soluble adenylate cyclase, decrease in cyclic AMP concentration, inhibition of protein kinase A (PKA)-dependent phosphorylation of specific subunits of the mitochondrial electron transport system, including NDUFS2. In the hypothalamus, inhibits leptin-induced reactive oxygen species (ROS) formation and mediates cannabinoid-induced increase in SREBF1 and FASN gene expression. In response to cannabinoids, drives the release of orexigenic beta-endorphin, but not that of melanocyte-stimulating hormone alpha/alpha-MSH, from hypothalamic POMC neurons, hence promoting food intake. In the hippocampus, regulates cellular respiration and energy production in response to cannabinoids. Involved in cannabinoid-dependent depolarization-induced suppression of inhibition (DSI), a process in which depolarization of CA1 postsynaptic pyramidal neurons mobilizes eCBs, which retrogradely activate presynaptic CB1 receptors, transiently decreasing GABAergic inhibitory neurotransmission. Also reduces excitatory synaptic transmission. In superior cervical ganglions and cerebral vascular smooth muscle cells, inhibits voltage-gated Ca(2+) channels in a constitutive, as well as agonist-dependent manner. In cerebral vascular smooth muscle cells, cannabinoid-induced inhibition of voltage-gated Ca(2+) channels leads to vasodilation and decreased vascular tone. Induces leptin production in adipocytes and reduces LRP2-mediated leptin clearance in the kidney, hence participating in hyperleptinemia. In adipose tissue, CNR1 signaling leads to increased expression of SREBF1, ACACA and FASN genes. In the liver, activation by endocannabinoids leads to increased de novo lipogenesis and reduced fatty acid catabolism, associated with increased expression of SREBF1/SREBP-1, GCK, ACACA, ACACB and FASN genes. May also affect de novo cholesterol synthesis and HDL-cholesteryl ether uptake. Peripherally modulates energy metabolism. In high carbohydrate diet-induced obesity, may decrease the expression of mitochondrial dihydrolipoyl dehydrogenase/DLD in striated muscles, as well as that of selected glucose/ pyruvate metabolic enzymes, hence affecting energy expenditure through mitochondrial metabolism. In response to cannabinoid anandamide, elicits a pro-inflammatory response in macrophages, which involves NLRP3 inflammasome activation and IL1B and IL18 secretion. In macrophages infiltrating pancreatic islets, this process may participate in the progression of type-2 diabetes and associated loss of pancreatic beta-cells. In Mus musculus (Mouse), this protein is Cannabinoid receptor 1 (Cnr1).